The following is a 300-amino-acid chain: GTPase Era (300 aa).

The 170-residue stretch at Lys4–Lys173 folds into the Era-type G domain. Residues Gly12–Ser19 form a G1 region. Residue Gly12–Ser19 coordinates GTP. The interval Gln38–Asn42 is G2. A G3 region spans residues Asp59–Gly62. GTP is bound by residues Asp59–Phe63 and Ser122–Glu125. A G4 region spans residues Ser122–Glu125. Residues Ile152–Ala154 are G5. The KH type-2 domain occupies Leu204 to Asn282.

Belongs to the TRAFAC class TrmE-Era-EngA-EngB-Septin-like GTPase superfamily. Era GTPase family. As to quaternary structure, monomer.

The protein resides in the cytoplasm. It localises to the cell membrane. Functionally, an essential GTPase that binds both GDP and GTP, with rapid nucleotide exchange. Plays a role in 16S rRNA processing and 30S ribosomal subunit biogenesis and possibly also in cell cycle regulation and energy metabolism. The polypeptide is GTPase Era (Ureaplasma urealyticum serovar 10 (strain ATCC 33699 / Western)).